Consider the following 203-residue polypeptide: Holliday junction branch migration complex subunit RuvA (203 aa).

A domain I region spans residues 1–64 (MIGRLRGIIL…EDAQLLYGFN (64 aa)). The segment at 65–142 (NKQERMLFRE…KGLHGDLFTP (78 aa)) is domain II. The tract at residues 143–154 (AADLVLTSPNGP) is flexible linker. The segment at 155 to 203 (TSDDAEQEAVAALVALGYKPQEASRMVSKIAKPDANSETLIREALRAAL) is domain III.

The protein belongs to the RuvA family. As to quaternary structure, homotetramer. Forms an RuvA(8)-RuvB(12)-Holliday junction (HJ) complex. HJ DNA is sandwiched between 2 RuvA tetramers; dsDNA enters through RuvA and exits via RuvB. An RuvB hexamer assembles on each DNA strand where it exits the tetramer. Each RuvB hexamer is contacted by two RuvA subunits (via domain III) on 2 adjacent RuvB subunits; this complex drives branch migration. In the full resolvosome a probable DNA-RuvA(4)-RuvB(12)-RuvC(2) complex forms which resolves the HJ.

Its subcellular location is the cytoplasm. Its function is as follows. The RuvA-RuvB-RuvC complex processes Holliday junction (HJ) DNA during genetic recombination and DNA repair, while the RuvA-RuvB complex plays an important role in the rescue of blocked DNA replication forks via replication fork reversal (RFR). RuvA specifically binds to HJ cruciform DNA, conferring on it an open structure. The RuvB hexamer acts as an ATP-dependent pump, pulling dsDNA into and through the RuvAB complex. HJ branch migration allows RuvC to scan DNA until it finds its consensus sequence, where it cleaves and resolves the cruciform DNA. The protein is Holliday junction branch migration complex subunit RuvA of Enterobacter sp. (strain 638).